Consider the following 435-residue polypeptide: Glucoside xylosyltransferase 1 (435 aa).

At 1–6 (MRRYLR) the chain is on the cytoplasmic side. Residues 7–29 (VVGLCLACGFCSLLYAFSQLAVS) traverse the membrane as a helical; Signal-anchor for type II membrane protein segment. The Lumenal portion of the chain corresponds to 30 to 435 (LEEGAAVGRR…NRYDTPPKER (406 aa)). Asparagine 168 and asparagine 232 each carry an N-linked (GlcNAc...) asparagine glycan.

This sequence belongs to the glycosyltransferase 8 family.

It is found in the membrane. The enzyme catalyses 3-O-(beta-D-glucosyl)-L-seryl-[EGF-like domain protein] + UDP-alpha-D-xylose = 3-O-[alpha-D-xylosyl-(1-&gt;3)-beta-D-glucosyl]-L-seryl-[EGF-like domain protein] + UDP + H(+). Functionally, glycosyltransferase which elongates the O-linked glucose attached to EGF-like repeats in the extracellular domain of Notch proteins by catalyzing the addition of xylose. The sequence is that of Glucoside xylosyltransferase 1 (Gxylt1) from Rattus norvegicus (Rat).